The primary structure comprises 241 residues: Accessory protein p30II (241 aa).

2 short sequence motifs (nuclear localization signal) span residues 73 to 78 and 91 to 98; these read RRCRSR and GPRRSRPR. Composition is skewed to low complexity over residues 79–100 and 107–136; these read CVSP…PRLS and PSST…TSRS. The tract at residues 79 to 151 is disordered; it reads CVSPRGGAFS…GKHRNSPADT (73 aa). Positions 175-184 match the Mitochondrial targeting signal motif; sequence LRVWRLCTRR.

This sequence belongs to the HTLV-1 accessory protein p30II family. As to quaternary structure, p30II binds to the KIX domains of CREBBP and EP300.

The protein resides in the host nucleus. The protein localises to the host nucleolus. Its subcellular location is the host mitochondrion inner membrane. P30II is a multifunctional regulator that sequesters EP300/CREBBP and down-regulates CREB-responsive element (CRE) and Tax-responsive element (TRE) mediated transcription. Specifically binds and represses tax/rex mRNA nuclear export. Since Tax and Rex are positive regulators of viral gene expression, their inhibition by p30II reduces virion production, and allows the virus to escape the host immune surveillance and persist latently in an immune-competent host. In terms of biological role, p13II increases mitochondrial permeability to monovalent cations, producing a rapid, membrane potential-dependent influx of potassium. This could involve a channel-forming activity. Interferes with cell proliferation and transformation and promotes apoptosis induced by ceramide and Fas ligand, probably using the Ras signaling. The chain is Accessory protein p30II from Human T-cell leukemia virus 1 (strain Japan ATK-1 subtype A) (HTLV-1).